The primary structure comprises 413 residues: Gamma-glutamyl phosphate reductase (413 aa).

It belongs to the gamma-glutamyl phosphate reductase family.

It is found in the cytoplasm. It carries out the reaction L-glutamate 5-semialdehyde + phosphate + NADP(+) = L-glutamyl 5-phosphate + NADPH + H(+). It participates in amino-acid biosynthesis; L-proline biosynthesis; L-glutamate 5-semialdehyde from L-glutamate: step 2/2. In terms of biological role, catalyzes the NADPH-dependent reduction of L-glutamate 5-phosphate into L-glutamate 5-semialdehyde and phosphate. The product spontaneously undergoes cyclization to form 1-pyrroline-5-carboxylate. In Caulobacter vibrioides (strain ATCC 19089 / CIP 103742 / CB 15) (Caulobacter crescentus), this protein is Gamma-glutamyl phosphate reductase.